The chain runs to 631 residues: tRNA uridine 5-carboxymethylaminomethyl modification enzyme MnmG (631 aa).

Position 15 to 20 (glycine 15 to glycine 20) interacts with FAD. Positions threonine 203–threonine 232 are disordered. Residues lysine 216–threonine 232 show a composition bias toward basic and acidic residues. Glycine 276–phenylalanine 290 contributes to the NAD(+) binding site.

This sequence belongs to the MnmG family. In terms of assembly, homodimer. Heterotetramer of two MnmE and two MnmG subunits. The cofactor is FAD.

It is found in the cytoplasm. Its function is as follows. NAD-binding protein involved in the addition of a carboxymethylaminomethyl (cmnm) group at the wobble position (U34) of certain tRNAs, forming tRNA-cmnm(5)s(2)U34. This Lactobacillus gasseri (strain ATCC 33323 / DSM 20243 / BCRC 14619 / CIP 102991 / JCM 1131 / KCTC 3163 / NCIMB 11718 / NCTC 13722 / AM63) protein is tRNA uridine 5-carboxymethylaminomethyl modification enzyme MnmG.